The sequence spans 188 residues: Gamma-glutamylcyclotransferase (188 aa).

Y19 to S24 contacts substrate. E98 functions as the Proton acceptor in the catalytic mechanism. Y139 is a binding site for substrate. S173 carries the phosphoserine modification.

This sequence belongs to the gamma-glutamylcyclotransferase family. In terms of assembly, homodimer.

The enzyme catalyses an alpha-(gamma-L-glutamyl)-L-amino acid = 5-oxo-L-proline + an L-alpha-amino acid. Functionally, catalyzes the formation of 5-oxoproline from gamma-glutamyl dipeptides and may play a significant role in glutathione homeostasis. Induces release of cytochrome c from mitochondria with resultant induction of apoptosis. The sequence is that of Gamma-glutamylcyclotransferase from Homo sapiens (Human).